Consider the following 430-residue polypeptide: 3-phosphoshikimate 1-carboxyvinyltransferase (430 aa).

Residues Lys20, Ser21, and Arg25 each coordinate 3-phosphoshikimate. Lys20 contributes to the phosphoenolpyruvate binding site. Gly92 and Arg120 together coordinate phosphoenolpyruvate. Ser166, Gln168, Asp312, and Lys339 together coordinate 3-phosphoshikimate. A phosphoenolpyruvate-binding site is contributed by Gln168. Asp312 functions as the Proton acceptor in the catalytic mechanism. Residues Arg343 and Arg387 each contribute to the phosphoenolpyruvate site.

The protein belongs to the EPSP synthase family. In terms of assembly, monomer.

It localises to the cytoplasm. The catalysed reaction is 3-phosphoshikimate + phosphoenolpyruvate = 5-O-(1-carboxyvinyl)-3-phosphoshikimate + phosphate. It functions in the pathway metabolic intermediate biosynthesis; chorismate biosynthesis; chorismate from D-erythrose 4-phosphate and phosphoenolpyruvate: step 6/7. Its function is as follows. Catalyzes the transfer of the enolpyruvyl moiety of phosphoenolpyruvate (PEP) to the 5-hydroxyl of shikimate-3-phosphate (S3P) to produce enolpyruvyl shikimate-3-phosphate and inorganic phosphate. This is 3-phosphoshikimate 1-carboxyvinyltransferase from Lactococcus lactis subsp. cremoris (strain MG1363).